An 859-amino-acid chain; its full sequence is Probable helicase A859L (859 aa).

A Helicase ATP-binding domain is found at 178-349; sequence YQELRRSGRA…KNRELFGGVA (172 aa). 191-198 lines the ATP pocket; the sequence is MACRCGKT. The DEAH box signature appears at 298–301; sequence DECH. A Helicase C-terminal domain is found at 394–553; it reads QIIMALAYLK…RFYEHLLNPS (160 aa).

Belongs to the asfivirus helicase A859L family.

This chain is Probable helicase A859L, found in Ornithodoros (relapsing fever ticks).